Reading from the N-terminus, the 410-residue chain is Metacaspase-1 (410 aa).

Residues 1 to 94 are disordered; the sequence is MFPGSGRQTY…RQSGAMNDVS (94 aa). Composition is skewed to low complexity over residues 21-47 and 55-64; these read APQY…YNGP and NYNYGHYGPP. The span at 65–75 shows a compositional bias: gly residues; it reads QGQGQGYGQGG. Residues 80 to 94 are compositionally biased toward polar residues; sequence MYNNNRQSGAMNDVS. Catalysis depends on residues histidine 200 and cysteine 256.

It belongs to the peptidase C14B family.

Its function is as follows. Involved in cell death (apoptosis). This is Metacaspase-1 (MCA1) from Meyerozyma guilliermondii (strain ATCC 6260 / CBS 566 / DSM 6381 / JCM 1539 / NBRC 10279 / NRRL Y-324) (Yeast).